Consider the following 134-residue polypeptide: MASTFRLQIVTPSRTFYDDEVEMAIVRSTEGDLGIMSNHMLMVAPLKIGKVRIKKDGQFREAAISEGFVQVESEYTRIITDTAEWPEEIDVQRAEEAKERAEKRLSASQGEIDRLRAEIALKRALNRLSVANGK.

The protein belongs to the ATPase epsilon chain family. F-type ATPases have 2 components, CF(1) - the catalytic core - and CF(0) - the membrane proton channel. CF(1) has five subunits: alpha(3), beta(3), gamma(1), delta(1), epsilon(1). CF(0) has three main subunits: a, b and c.

It localises to the cell membrane. Functionally, produces ATP from ADP in the presence of a proton gradient across the membrane. The polypeptide is ATP synthase epsilon chain (Alkaliphilus oremlandii (strain OhILAs) (Clostridium oremlandii (strain OhILAs))).